The chain runs to 312 residues: Mas-related G-protein coupled receptor member B3 (312 aa).

Residues 1-31 (MALRTSLITTTAPDKTSLPISICIIKFQVMN) lie on the Extracellular side of the membrane. Residues 32–52 (LLSITISPVGMVLNIIVLWFL) traverse the membrane as a helical segment. The Cytoplasmic portion of the chain corresponds to 53 to 67 (GFQICRNAFSAYILN). A helical transmembrane segment spans residues 68-88 (LAVADFLFLCSHSIFSFLIVC). Topologically, residues 89 to 106 (KLHYFLFYIRQLLDTVTM) are extracellular. The helical transmembrane segment at 107–127 (FAYVFGLSITTIISIECCLSI) threads the bilayer. The Cytoplasmic portion of the chain corresponds to 128-140 (MWPIWYHCQRPRH). The chain crosses the membrane as a helical span at residues 141-161 (TSAVICVLLWALSLLFPALQM). Residues 162-180 (EKCSVLFNTFEYSWCGIIN) lie on the Extracellular side of the membrane. A helical transmembrane segment spans residues 181–201 (IISGAWLVVLFVVLCGFSLIL). Residues 202-220 (LLRISCGSQQIPVTRLNVT) lie on the Cytoplasmic side of the membrane. Residues 221 to 241 (IALRVLLLLIFGIPFGIFWIV) traverse the membrane as a helical segment. At 242-259 (DKWNEENFFVRACGFSHH) the chain is on the extracellular side. Residues 260–280 (ILYVYCINICVNATIYFLVGS) traverse the membrane as a helical segment. Topologically, residues 281–312 (IRHGKFQKMTLKLILQRAIQGTPEEEGGERGP) are cytoplasmic.

This sequence belongs to the G-protein coupled receptor 1 family. Mas subfamily.

The protein resides in the membrane. Orphan receptor. Probably involved in the function of nociceptive neurons. May regulate nociceptor function and/or development, including the sensation or modulation of pain. This is Mas-related G-protein coupled receptor member B3 (Mrgprb3) from Mus musculus (Mouse).